The following is a 588-amino-acid chain: MTLFQVYTRALRYLTVHKWRVAVVVIANVILAAITIAEPVLFGRIIDAISSGTNVTPILILWAGFGVFNTVAYVAVAREADRLAHGRRATLLTEAFGRIISMPLSWHHLRGTSNALHTLLRASETLFGLWLEFMRTHLATFVALVLLIPTAMAMDLRLSFVLIGLGIVYWFIGKWVMGRTKDGQASVEEHYHSVFAHVSDSISNVSVLHSYNRIEAETKALKSFTEKLLSAQYPVLDWWAFASALNRTASTVSMMIILVIGTVLVKNGELRVGDVIAFIGFANLLIGRLDQMRQFVTQIFEARAKLEDFFVLEDAVKEREEPGDARELSNVSGTVEFRNINFGFANTKQGVHDVSFTAKAGETVAIVGPTGAGKTTLINLLQRVYDPDSGQILIDGTDISTVTKNSLRNSIATVFQDAGLLNRSIRENIRLGRETATDAEVVEAAAAAAATDFIDSRINGYLTQVGERGNRLSGGERQRIAIARAILKNAPILVLDEATSALDVETEARVKAAVDALRKNRTTFIIAHRLSTVRDADLVLFLDQGRIIEKGTFDELTQRGGRFTSLLRTSGLLTEDEGQQPRPKAIAS.

The ABC transmembrane type-1 domain occupies V21 to E301. 6 consecutive transmembrane segments (helical) span residues A22–F42, P57–A77, T136–L156, L158–G178, T248–G268, and V272–M292. One can recognise an ABC transporter domain in the interval V335–T569. G368 to T375 provides a ligand contact to ATP.

This sequence belongs to the ABC transporter superfamily. Beta-(1--&gt;2)glucan exporter (TC 3.A.1.108.1) family. In terms of assembly, homodimer.

The protein localises to the cell inner membrane. It carries out the reaction [(1-&gt;2)-beta-D-glucosyl](n)(in) + ATP + H2O = [(1-&gt;2)-beta-D-glucosyl](n)(out) + ADP + phosphate + H(+). Functionally, involved in beta-(1--&gt;2)glucan export which is required for crown gall tumor formation. Transmembrane domains (TMD) form a pore in the inner membrane and the ATP-binding domain (NBD) is responsible for energy generation. In Rhizobium radiobacter (Agrobacterium tumefaciens), this protein is Beta-(1--&gt;2)glucan export ATP-binding/permease protein NdvA.